The sequence spans 392 residues: Ceramide synthase 5 (392 aa).

Topologically, residues 1 to 46 (MATAAQGPLSLLWGWLWSERFWLPENVSWADLEGPADGYGYPRGRH) are lumenal. Asn26 is a glycosylation site (N-linked (GlcNAc...) asparagine). Residues 47–67 (ILSVFPLAAGIFFVRLLFERF) traverse the membrane as a helical segment. The homeobox-like stretch occupies residues 75 to 136 (CIGIEDSGPY…RHRRNQDKPP (62 aa)). A TLC domain is found at 139 to 340 (TKFCESMWRF…IARIALKALI (202 aa)). Helical transmembrane passes span 148-168 (FTFY…SPWF), 183-203 (LSSG…SLMF), 214-234 (FLIM…SYIN), and 272-292 (LFVI…PFWI). The short motif at 299-309 (ESWEIIGPYAS) is the Last loop motif element. The chain crosses the membrane as a helical span at residues 311–331 (WLLNGLLLTLQLLHVIWSYLI). Over 332 to 392 (ARIALKALIR…HMGGSYWAEE (61 aa)) the chain is Cytoplasmic. The interval 349 to 392 (RSDVESSSEEEDVTTCTKSPCDSSSSNGANRVNGHMGGSYWAEE) is disordered. Positions 362 to 378 (TTCTKSPCDSSSSNGAN) are enriched in polar residues.

Interacts with PAQR4; the interaction regulates the stability and activity of CERS5 and is inhibited in presence of ceramides. Phosphorylated at the C-terminus by CK2.

It localises to the endoplasmic reticulum membrane. It catalyses the reaction a sphingoid base + hexadecanoyl-CoA = an N-hexadecanoyl-sphingoid base + CoA + H(+). It carries out the reaction sphinganine + hexadecanoyl-CoA = N-hexadecanoylsphinganine + CoA + H(+). The catalysed reaction is hexadecasphinganine + hexadecanoyl-CoA = N-hexadecanoylhexadecasphinganine + CoA + H(+). The enzyme catalyses sphing-4-enine + hexadecanoyl-CoA = N-hexadecanoylsphing-4-enine + CoA + H(+). It catalyses the reaction 2-hydroxyhexadecanoyl-CoA + sphinganine = N-(2-hydroxyhexadecanoyl)-sphinganine + CoA + H(+). It carries out the reaction sphinganine + tetradecanoyl-CoA = N-(tetradecanoyl)-sphinganine + CoA + H(+). The catalysed reaction is sphinganine + octadecanoyl-CoA = N-(octadecanoyl)-sphinganine + CoA + H(+). The enzyme catalyses sphinganine + (9Z)-octadecenoyl-CoA = N-(9Z-octadecenoyl)-sphinganine + CoA + H(+). It catalyses the reaction a fatty acyl-CoA + sphing-4-enine = an N-acylsphing-4-enine + CoA + H(+). The protein operates within lipid metabolism; sphingolipid metabolism. Its activity is regulated as follows. Inhibited by fumonisin B1. Functionally, ceramide synthase that catalyzes the transfer of the acyl chain from acyl-CoA to a sphingoid base, with high selectivity toward palmitoyl-CoA (hexadecanoyl-CoA; C16:0-CoA). Can use other acyl donors, but with less efficiency. N-acylates sphinganine and sphingosine bases to form dihydroceramides and ceramides in de novo synthesis and salvage pathways, respectively. Plays a role in de novo ceramide synthesis and surfactant homeostasis in pulmonary epithelia. The polypeptide is Ceramide synthase 5 (Homo sapiens (Human)).